A 472-amino-acid polypeptide reads, in one-letter code: Homeobox protein PKNOX2 (472 aa).

The tract at residues 1–62 is disordered; it reads MMQHASPAPA…STPVPSAPID (62 aa). The segment covering 26 to 38 has biased composition (polar residues); that stretch reads DSPQMTATAQPPS. Residues 46-56 are compositionally biased toward low complexity; sequence SAPSAAASTPV. The region spanning 96 to 179 is the MEIS N-terminal domain; it reads GSECITSASF…MHSDNLLRND (84 aa). A DNA-binding region (homeobox) is located at residues 291-350; that stretch reads KRGVLPKHATNIMRSWLFQHLMHPYPTEDEKRQIAAQTNLTLLQVNNWFINARRRILQPM. Disordered stretches follow at residues 351-371, 386-405, and 422-472; these read LDAS…QHRP, QQQG…LDNL, and MAAH…DSLE. Over residues 361–371 the composition is skewed to basic residues; sequence KAKKIKSQHRP. Over residues 429–454 the composition is skewed to acidic residues; that stretch reads LDGTEEEDEDEMEEEEEEELEEEVDE.

The protein belongs to the TALE/MEIS homeobox family.

Its subcellular location is the nucleus. The chain is Homeobox protein PKNOX2 (PKNOX2) from Homo sapiens (Human).